We begin with the raw amino-acid sequence, 498 residues long: tRNA-2-methylthio-N(6)-dimethylallyladenosine synthase (498 aa).

Residues 2-118 (PRYSITTFGC…LPGLLGDLAI (117 aa)) enclose the MTTase N-terminal domain. [4Fe-4S] cluster is bound by residues cysteine 11, cysteine 47, cysteine 81, cysteine 163, cysteine 167, and cysteine 170. The Radical SAM core domain occupies 149-393 (PRAAPTAFVT…FEESEALLAA (245 aa)). The region spanning 396–467 (SALVGTTQEV…KHSLQAELTE (72 aa)) is the TRAM domain. The disordered stretch occupies residues 469 to 498 (ARAAARPRQRGGLEPRPARRSLPVVAAEGG).

Belongs to the methylthiotransferase family. MiaB subfamily. As to quaternary structure, monomer. Requires [4Fe-4S] cluster as cofactor.

It localises to the cytoplasm. It carries out the reaction N(6)-dimethylallyladenosine(37) in tRNA + (sulfur carrier)-SH + AH2 + 2 S-adenosyl-L-methionine = 2-methylsulfanyl-N(6)-dimethylallyladenosine(37) in tRNA + (sulfur carrier)-H + 5'-deoxyadenosine + L-methionine + A + S-adenosyl-L-homocysteine + 2 H(+). In terms of biological role, catalyzes the methylthiolation of N6-(dimethylallyl)adenosine (i(6)A), leading to the formation of 2-methylthio-N6-(dimethylallyl)adenosine (ms(2)i(6)A) at position 37 in tRNAs that read codons beginning with uridine. The chain is tRNA-2-methylthio-N(6)-dimethylallyladenosine synthase from Sorangium cellulosum (strain So ce56) (Polyangium cellulosum (strain So ce56)).